A 1161-amino-acid polypeptide reads, in one-letter code: DNA-directed RNA polymerase subunit beta' (1161 aa).

Cys-60, Cys-62, Cys-75, and Cys-78 together coordinate Zn(2+). Residues Asp-449, Asp-451, and Asp-453 each contribute to the Mg(2+) site. Positions 790, 864, 871, and 874 each coordinate Zn(2+).

Belongs to the RNA polymerase beta' chain family. In terms of assembly, the RNAP catalytic core consists of 2 alpha, 1 beta, 1 beta' and 1 omega subunit. When a sigma factor is associated with the core the holoenzyme is formed, which can initiate transcription. The cofactor is Mg(2+). Requires Zn(2+) as cofactor.

It catalyses the reaction RNA(n) + a ribonucleoside 5'-triphosphate = RNA(n+1) + diphosphate. Functionally, DNA-dependent RNA polymerase catalyzes the transcription of DNA into RNA using the four ribonucleoside triphosphates as substrates. This chain is DNA-directed RNA polymerase subunit beta', found in Clostridioides difficile (strain 630) (Peptoclostridium difficile).